We begin with the raw amino-acid sequence, 345 residues long: MSKRGTRTPGYWYDNTPIPLPARILAPVYGAAIALRRALYRRGWRRRHGVPVPVIVVGNVTAGGTGKTPLTIALVAKLQEAGWTPGVASRGYGRDDAGTARWVEADTPVALGGDEPVLIAWKTGARVRVDSDRLAAARALVEAGCDIVICDDGLQHYRLARDVEIEVVDGQRRYGNGRLLPAGPLREPAARAQDCDFRVVNLGQASATATPQAPDDAGFGKWQMRLSIDSVQPMDGKRAQPLSMLAGQRVHAVAGIAHPERFFAMLRARGIGVVPHAFADHHVYRAADFSFGSRLPVLMTEKDAVKCRPFADEWLYSVPLKAELPAAFWVSLLDRLNKLASRQGV.

ATP is bound at residue 61–68 (TAGGTGKT).

It belongs to the LpxK family.

It carries out the reaction a lipid A disaccharide + ATP = a lipid IVA + ADP + H(+). The protein operates within glycolipid biosynthesis; lipid IV(A) biosynthesis; lipid IV(A) from (3R)-3-hydroxytetradecanoyl-[acyl-carrier-protein] and UDP-N-acetyl-alpha-D-glucosamine: step 6/6. Functionally, transfers the gamma-phosphate of ATP to the 4'-position of a tetraacyldisaccharide 1-phosphate intermediate (termed DS-1-P) to form tetraacyldisaccharide 1,4'-bis-phosphate (lipid IVA). The chain is Tetraacyldisaccharide 4'-kinase from Xanthomonas axonopodis pv. citri (strain 306).